A 615-amino-acid polypeptide reads, in one-letter code: TANK-binding kinase 1-binding protein 1 (615 aa).

The interval 1-279 is homodimerization; sequence MESMFEDDIS…QDLASNQSER (279 aa). The stretch at 48 to 162 forms a coiled coil; the sequence is YGDIKERLGG…ALVETHLRQI (115 aa). At Ser-184 the chain carries Phosphoserine. Positions 221–276 form a coiled coil; the sequence is VSDLERRRLEEALEAAQGEARGAQLREEQLQAECERLQGELKQLQETRAQDLASNQ. The segment at 280-329 is interaction with TBK1 and IKBKE; the sequence is DMAWVKRVGDDQVNLALAYTELTEELGRLRELSSLQGRILRTLLQEQARS. The interval 326 to 458 is disordered; it reads QARSGGQRHS…SHHVKAGFQG (133 aa). The segment covering 345–365 has biased composition (pro residues); it reads PQCPSPSPPARAAPPCPPCQS. Ser-365, Ser-372, Ser-379, Ser-385, Ser-400, and Ser-415 each carry phosphoserine. Positions 389–406 are enriched in pro residues; that stretch reads PSCPSPVPQRRSPVPPSC. The span at 416-435 shows a compositional bias: pro residues; the sequence is PVPPSCPAPQPRPPPPPPPG. Residues Ser-504 and Ser-534 each carry the phosphoserine modification. The UBZ1-type zinc-finger motif lies at 583-609; it reads IRSCPLCQLGFPVGYPDDALIKHIDSH. 4 residues coordinate Zn(2+): Cys-586, Cys-589, His-605, and His-609.

Homodimer. May form a heterodimer with NAP1. Interacts with TKB1 and IKBKE. Weakly interacts with DDX3X. As to quaternary structure, (Microbial infection) Interacts with vaccinia virus protein C6. As to expression, detected in leukocytes, lung, placenta, small intestine, liver, kidney, spleen, muscle, heart, brain and at low levels in thymus.

In terms of biological role, adapter protein which constitutively binds TBK1 and IKBKE playing a role in antiviral innate immunity. The polypeptide is TANK-binding kinase 1-binding protein 1 (Homo sapiens (Human)).